We begin with the raw amino-acid sequence, 429 residues long: Adenylosuccinate synthetase (429 aa).

Residues 12-18 (GDEGKGK) and 40-42 (GHT) contribute to the GTP site. Residue aspartate 13 is the Proton acceptor of the active site. Positions 13 and 40 each coordinate Mg(2+). IMP contacts are provided by residues 13 to 16 (DEGK), 38 to 41 (NAGH), threonine 129, arginine 143, glutamine 223, threonine 238, and arginine 302. Histidine 41 acts as the Proton donor in catalysis. 298–304 (VVTGRKR) contributes to the substrate binding site. GTP-binding positions include arginine 304, 330–332 (KLD), and 412–414 (STS).

The protein belongs to the adenylosuccinate synthetase family. As to quaternary structure, homodimer. Requires Mg(2+) as cofactor.

Its subcellular location is the cytoplasm. The catalysed reaction is IMP + L-aspartate + GTP = N(6)-(1,2-dicarboxyethyl)-AMP + GDP + phosphate + 2 H(+). The protein operates within purine metabolism; AMP biosynthesis via de novo pathway; AMP from IMP: step 1/2. In terms of biological role, plays an important role in the de novo pathway of purine nucleotide biosynthesis. Catalyzes the first committed step in the biosynthesis of AMP from IMP. The polypeptide is Adenylosuccinate synthetase (Maricaulis maris (strain MCS10) (Caulobacter maris)).